Here is a 734-residue protein sequence, read N- to C-terminus: Photosystem I P700 chlorophyll a apoprotein A2 (734 aa).

8 helical membrane-spanning segments follow: residues 46-69 (IFAS…FHVA), 135-158 (LYTG…LHLQ), 175-199 (LNHH…HVAI), 273-291 (MAHH…GHMY), 330-353 (LHFQ…QHMY), 369-395 (AALY…IFFI), 417-439 (AIIS…LYVH), and 517-535 (FLVH…LILV). Positions 559 and 568 each coordinate [4Fe-4S] cluster. 2 helical membrane passes run 575–596 (AFYL…YWHW) and 643–665 (LSVW…MFLI). The chlorophyll a site is built by H654, M662, and Y670. W671 serves as a coordination point for phylloquinone. A helical membrane pass occupies residues 707 to 727 (LVGLAHFSVGYIFTYAAFLIA).

The protein belongs to the PsaA/PsaB family. As to quaternary structure, the PsaA/B heterodimer binds the P700 chlorophyll special pair and subsequent electron acceptors. PSI consists of a core antenna complex that captures photons, and an electron transfer chain that converts photonic excitation into a charge separation. The eukaryotic PSI reaction center is composed of at least 11 subunits. The cofactor is P700 is a chlorophyll a/chlorophyll a' dimer, A0 is one or more chlorophyll a, A1 is one or both phylloquinones and FX is a shared 4Fe-4S iron-sulfur center..

Its subcellular location is the plastid. The protein localises to the chloroplast thylakoid membrane. The catalysed reaction is reduced [plastocyanin] + hnu + oxidized [2Fe-2S]-[ferredoxin] = oxidized [plastocyanin] + reduced [2Fe-2S]-[ferredoxin]. Functionally, psaA and PsaB bind P700, the primary electron donor of photosystem I (PSI), as well as the electron acceptors A0, A1 and FX. PSI is a plastocyanin-ferredoxin oxidoreductase, converting photonic excitation into a charge separation, which transfers an electron from the donor P700 chlorophyll pair to the spectroscopically characterized acceptors A0, A1, FX, FA and FB in turn. Oxidized P700 is reduced on the lumenal side of the thylakoid membrane by plastocyanin. The sequence is that of Photosystem I P700 chlorophyll a apoprotein A2 from Lactuca sativa (Garden lettuce).